The sequence spans 385 residues: V-type proton ATPase subunit C (385 aa).

It belongs to the V-ATPase C subunit family. As to quaternary structure, V-ATPase is a heteromultimeric enzyme made up of two complexes: the ATP-hydrolytic V1 complex and the proton translocation V0 complex. The V1 complex consists of three catalytic AB heterodimers that form a heterohexamer, three peripheral stalks each consisting of EG heterodimers, one central rotor including subunits D and F, and the regulatory subunits C and H. The proton translocation complex V0 consists of the proton transport subunit a, a ring of proteolipid subunits c9c'', rotary subunit d, subunits e and f, and the accessory subunits vah-19/Ac45 and vah-20/PRR. Interacts with V-type proton ATPase subunits a1 unc-32, a2 vha-5 and a3 vha-6.

It localises to the cytoplasm. It is found in the membrane. Functionally, subunit of the V1 complex of vacuolar(H+)-ATPase (V-ATPase), a multisubunit enzyme composed of a peripheral complex (V1) that hydrolyzes ATP and a membrane integral complex (V0) that translocates protons. V-ATPase is responsible for acidifying and maintaining the pH of intracellular compartments and in some cell types, is targeted to the plasma membrane, where it is responsible for acidifying the extracellular environment. Subunit C is necessary for the assembly of the catalytic sector of the enzyme and is likely to have a specific function in its catalytic activity. Has roles in embryogenesis and ovulation. In Caenorhabditis briggsae, this protein is V-type proton ATPase subunit C.